Consider the following 359-residue polypeptide: Phosphoribosylformylglycinamidine cyclo-ligase (359 aa).

It belongs to the AIR synthase family.

The protein resides in the cytoplasm. It carries out the reaction 2-formamido-N(1)-(5-O-phospho-beta-D-ribosyl)acetamidine + ATP = 5-amino-1-(5-phospho-beta-D-ribosyl)imidazole + ADP + phosphate + H(+). The protein operates within purine metabolism; IMP biosynthesis via de novo pathway; 5-amino-1-(5-phospho-D-ribosyl)imidazole from N(2)-formyl-N(1)-(5-phospho-D-ribosyl)glycinamide: step 2/2. The protein is Phosphoribosylformylglycinamidine cyclo-ligase of Brucella melitensis biotype 2 (strain ATCC 23457).